The primary structure comprises 723 residues: Threonine--tRNA ligase, mitochondrial (723 aa).

At Ser-57 the chain carries Phosphoserine. A TGS domain is found at Arg-64–Thr-126.

Belongs to the class-II aminoacyl-tRNA synthetase family. Homodimer.

It is found in the mitochondrion matrix. It catalyses the reaction tRNA(Thr) + L-threonine + ATP = L-threonyl-tRNA(Thr) + AMP + diphosphate + H(+). In terms of biological role, catalyzes the attachment of threonine to tRNA(Thr) in a two-step reaction: threonine is first activated by ATP to form Thr-AMP and then transferred to the acceptor end of tRNA(Thr). Also edits incorrectly charged tRNA(Thr) via its editing domain. This chain is Threonine--tRNA ligase, mitochondrial (Tars2), found in Mus musculus (Mouse).